A 454-amino-acid polypeptide reads, in one-letter code: Bifunctional protein GlmU (454 aa).

The tract at residues 1-226 (MLAVAVLAAG…PDEVNGINNR (226 aa)) is pyrophosphorylase. UDP-N-acetyl-alpha-D-glucosamine contacts are provided by residues 7–10 (LAAG), lysine 21, glutamine 73, and 78–79 (GT). Aspartate 103 lines the Mg(2+) pocket. UDP-N-acetyl-alpha-D-glucosamine-binding residues include glycine 140, glutamate 155, asparagine 170, and asparagine 224. Asparagine 224 provides a ligand contact to Mg(2+). Residues 227–247 (RQLAQCEGVLQQRLRDHWMDE) are linker. The tract at residues 248–454 (GVTFVDPASC…WDRNTQAAQS (207 aa)) is N-acetyltransferase. UDP-N-acetyl-alpha-D-glucosamine is bound by residues arginine 329 and lysine 347. Histidine 359 serves as the catalytic Proton acceptor. UDP-N-acetyl-alpha-D-glucosamine-binding residues include tyrosine 362 and asparagine 373. 3 residues coordinate acetyl-CoA: alanine 376, alanine 419, and arginine 436.

This sequence in the N-terminal section; belongs to the N-acetylglucosamine-1-phosphate uridyltransferase family. It in the C-terminal section; belongs to the transferase hexapeptide repeat family. In terms of assembly, homotrimer. Mg(2+) serves as cofactor.

The protein resides in the cytoplasm. The catalysed reaction is alpha-D-glucosamine 1-phosphate + acetyl-CoA = N-acetyl-alpha-D-glucosamine 1-phosphate + CoA + H(+). The enzyme catalyses N-acetyl-alpha-D-glucosamine 1-phosphate + UTP + H(+) = UDP-N-acetyl-alpha-D-glucosamine + diphosphate. It participates in nucleotide-sugar biosynthesis; UDP-N-acetyl-alpha-D-glucosamine biosynthesis; N-acetyl-alpha-D-glucosamine 1-phosphate from alpha-D-glucosamine 6-phosphate (route II): step 2/2. The protein operates within nucleotide-sugar biosynthesis; UDP-N-acetyl-alpha-D-glucosamine biosynthesis; UDP-N-acetyl-alpha-D-glucosamine from N-acetyl-alpha-D-glucosamine 1-phosphate: step 1/1. It functions in the pathway bacterial outer membrane biogenesis; LPS lipid A biosynthesis. Catalyzes the last two sequential reactions in the de novo biosynthetic pathway for UDP-N-acetylglucosamine (UDP-GlcNAc). The C-terminal domain catalyzes the transfer of acetyl group from acetyl coenzyme A to glucosamine-1-phosphate (GlcN-1-P) to produce N-acetylglucosamine-1-phosphate (GlcNAc-1-P), which is converted into UDP-GlcNAc by the transfer of uridine 5-monophosphate (from uridine 5-triphosphate), a reaction catalyzed by the N-terminal domain. The chain is Bifunctional protein GlmU from Synechococcus sp. (strain CC9311).